The chain runs to 460 residues: 1-aminocyclopropane-1-carboxylate synthase 11 (460 aa).

Residues glutamate 45 and tyrosine 83 each coordinate substrate. An N6-(pyridoxal phosphate)lysine modification is found at lysine 267.

It belongs to the class-I pyridoxal-phosphate-dependent aminotransferase family. Homodimer and heterodimer. In vivo, the relevance of heterodimerization with other ACS enzymes is however unsure. Interacts with GRF3. Pyridoxal 5'-phosphate is required as a cofactor. In terms of processing, may be processed at its C-terminus. In terms of tissue distribution, expressed in roots.

The enzyme catalyses S-adenosyl-L-methionine = 1-aminocyclopropane-1-carboxylate + S-methyl-5'-thioadenosine + H(+). It functions in the pathway alkene biosynthesis; ethylene biosynthesis via S-adenosyl-L-methionine; ethylene from S-adenosyl-L-methionine: step 1/2. In terms of biological role, 1-aminocyclopropane-1-carboxylate synthase (ACS) enzymes catalyze the conversion of S-adenosyl-L-methionine (SAM) into 1-aminocyclopropane-1-carboxylate (ACC), a direct precursor of ethylene. This chain is 1-aminocyclopropane-1-carboxylate synthase 11 (ACS11), found in Arabidopsis thaliana (Mouse-ear cress).